A 100-amino-acid polypeptide reads, in one-letter code: MSCCLSSRVHITRPVLEQFLSFAKYLDGLSHGVPLLKQLCDHILFINPAIWIHTPAKVQLSLYTYLSAEFIGTATIYTTICRIGTVIKDNAHLKILLLGY.

Expressed in prostate and testis.

The chain is Putative protein BCL8 (NBEAP1) from Homo sapiens (Human).